The following is a 364-amino-acid chain: Histidinol-phosphate aminotransferase 1 (364 aa).

K211 bears the N6-(pyridoxal phosphate)lysine mark.

Belongs to the class-II pyridoxal-phosphate-dependent aminotransferase family. Histidinol-phosphate aminotransferase subfamily. In terms of assembly, homodimer. Pyridoxal 5'-phosphate is required as a cofactor.

It catalyses the reaction L-histidinol phosphate + 2-oxoglutarate = 3-(imidazol-4-yl)-2-oxopropyl phosphate + L-glutamate. Its pathway is amino-acid biosynthesis; L-histidine biosynthesis; L-histidine from 5-phospho-alpha-D-ribose 1-diphosphate: step 7/9. This chain is Histidinol-phosphate aminotransferase 1, found in Legionella pneumophila subsp. pneumophila (strain Philadelphia 1 / ATCC 33152 / DSM 7513).